The chain runs to 326 residues: tRNA-dihydrouridine(16) synthase (326 aa).

Residues 8 to 10 (PME) and Gln-69 each bind FMN. Cys-99 (proton donor) is an active-site residue. Residues Lys-140, 200-202 (NGE), and 224-225 (GR) contribute to the FMN site.

This sequence belongs to the Dus family. DusC subfamily. The cofactor is FMN.

The enzyme catalyses 5,6-dihydrouridine(16) in tRNA + NADP(+) = uridine(16) in tRNA + NADPH + H(+). The catalysed reaction is 5,6-dihydrouridine(16) in tRNA + NAD(+) = uridine(16) in tRNA + NADH + H(+). Catalyzes the synthesis of 5,6-dihydrouridine (D), a modified base found in the D-loop of most tRNAs, via the reduction of the C5-C6 double bond in target uridines. Specifically modifies U16 in tRNAs. The sequence is that of tRNA-dihydrouridine(16) synthase from Ralstonia nicotianae (strain ATCC BAA-1114 / GMI1000) (Ralstonia solanacearum).